We begin with the raw amino-acid sequence, 323 residues long: Peroxisome biogenesis protein 20 (323 aa).

A Glycyl cysteine thioester (Cys-Gly) (interchain with G-Cter in ubiquitin) cross-link involves residue C8. K19 participates in a covalent cross-link: Glycyl lysine isopeptide (Lys-Gly) (interchain with G-Cter in ubiquitin). 3 short sequence motifs (wxxxF/Y motif) span residues 89–93 (WSSEF), 102–105 (WVED), and 141–145 (WTQEF).

The protein belongs to the peroxisomal targeting signal receptor family. Interacts (via WxxxF/Y and LVxEF motifs) with PEX14; promoting translocation through the PEX13-PEX14 docking complex. Interacts with PEX7. Post-translationally, monoubiquitinated at Cys-8 by PEX2 during PEX20 passage through the PEX2-PEX10-PEX12 retrotranslocation channel: monoubiquitination acts as a signal for PEX20 extraction and is required for proper export from peroxisomes and recycling. When PEX5 recycling is compromised, polyubiquitinated at Lys-19 by PEX10 during its passage through the retrotranslocation channel, leading to its degradation.

The protein resides in the cytoplasm. It is found in the cytosol. Its subcellular location is the peroxisome matrix. Its function is as follows. Coreceptor required for the peroxisomal import of proteins containing a C-terminal PTS2-type peroxisomal targeting signal, such as 3-oxoacyl-CoA thiolase. Acts via its interaction with PEX7, promoting association between PEX7 bound to cargo proteins and the PEX13-PEX14 docking complex. PEX20 along with PEX7 and PTS2-containing cargo proteins are tranlocated into peroxisomes by passing through the PEX13-PEX14 docking complex. PEX20 coreceptor is then retrotranslocated into the cytosol, leading to release of bound cargo in the peroxisome matrix, and reset for a subsequent peroxisome import cycle. Also mediates peroxisomal import of proteins that do not contain PTS1- or PTS2-type peroxisomal targeting signals, such as acyl-CoA oxidases (Aox) izozymes. Import of acyl-CoA oxidases (Aox) izozymes is independent of PEX7. Required for PEX7 ubiquitination. This Komagataella pastoris (Yeast) protein is Peroxisome biogenesis protein 20.